The following is a 371-amino-acid chain: Ferrochelatase (371 aa).

His218 and Glu299 together coordinate Fe cation.

This sequence belongs to the ferrochelatase family.

The protein resides in the cytoplasm. It catalyses the reaction heme b + 2 H(+) = protoporphyrin IX + Fe(2+). Its pathway is porphyrin-containing compound metabolism; protoheme biosynthesis; protoheme from protoporphyrin-IX: step 1/1. Functionally, catalyzes the ferrous insertion into protoporphyrin IX. This Cupriavidus metallidurans (strain ATCC 43123 / DSM 2839 / NBRC 102507 / CH34) (Ralstonia metallidurans) protein is Ferrochelatase.